The following is a 375-amino-acid chain: tRNA-specific 2-thiouridylase MnmA (375 aa).

Residues 9–16 and L35 contribute to the ATP site; that span reads AMSGGVDS. The active-site Nucleophile is the C105. The cysteines at positions 105 and 201 are disulfide-linked. ATP is bound at residue G129. An interaction with tRNA region spans residues 151–153; it reads KNQ. C201 (cysteine persulfide intermediate) is an active-site residue. Residues 307-308 form an interaction with tRNA region; the sequence is RY.

It belongs to the MnmA/TRMU family.

The protein resides in the cytoplasm. It catalyses the reaction S-sulfanyl-L-cysteinyl-[protein] + uridine(34) in tRNA + AH2 + ATP = 2-thiouridine(34) in tRNA + L-cysteinyl-[protein] + A + AMP + diphosphate + H(+). Its function is as follows. Catalyzes the 2-thiolation of uridine at the wobble position (U34) of tRNA, leading to the formation of s(2)U34. This chain is tRNA-specific 2-thiouridylase MnmA, found in Leptospira interrogans serogroup Icterohaemorrhagiae serovar Lai (strain 56601).